Reading from the N-terminus, the 398-residue chain is Elongation factor Tu (398 aa).

The tr-type G domain occupies 10 to 208 (KPHVNVGTIG…ALDDYIPEPE (199 aa)). The segment at 19 to 26 (GHVDHGKT) is G1. GTP is bound at residue 19–26 (GHVDHGKT). Residue threonine 26 coordinates Mg(2+). Residues 61-65 (GITIA) are G2. Residues 82–85 (DCPG) are G3. Residues 82-86 (DCPGH) and 137-140 (NKAD) each bind GTP. Residues 137-140 (NKAD) form a G4 region. The G5 stretch occupies residues 175–177 (SAL).

Belongs to the TRAFAC class translation factor GTPase superfamily. Classic translation factor GTPase family. EF-Tu/EF-1A subfamily. In terms of assembly, monomer.

The protein resides in the cytoplasm. The enzyme catalyses GTP + H2O = GDP + phosphate + H(+). GTP hydrolase that promotes the GTP-dependent binding of aminoacyl-tRNA to the A-site of ribosomes during protein biosynthesis. This is Elongation factor Tu from Marinobacter nauticus (strain ATCC 700491 / DSM 11845 / VT8) (Marinobacter aquaeolei).